The primary structure comprises 641 residues: XK-related protein 6 (641 aa).

2 disordered regions span residues 20 to 47 (LDEA…DGSE) and 84 to 120 (RSAA…PPPP). The span at 34-46 (PGGGGCGGGGDGS) shows a compositional bias: gly residues. Over residues 107 to 120 (PPTPSAARPEPPPP) the composition is skewed to pro residues. The next 7 membrane-spanning stretches (helical) occupy residues 130 to 150 (LWIV…LWLA), 159 to 179 (YVYF…VQSL), 318 to 338 (TLPC…LASY), 372 to 392 (VISF…FVVV), 413 to 433 (WEEI…WFNV), 442 to 462 (MFAY…LWYF), and 473 to 493 (AVPA…MMLL).

This sequence belongs to the XK family.

It is found in the cell membrane. This chain is XK-related protein 6, found in Homo sapiens (Human).